Consider the following 102-residue polypeptide: Large ribosomal subunit protein bL21 (102 aa).

Belongs to the bacterial ribosomal protein bL21 family. In terms of assembly, part of the 50S ribosomal subunit. Contacts protein L20.

Its function is as follows. This protein binds to 23S rRNA in the presence of protein L20. The chain is Large ribosomal subunit protein bL21 from Latilactobacillus sakei subsp. sakei (strain 23K) (Lactobacillus sakei subsp. sakei).